Consider the following 280-residue polypeptide: Ribulose-phosphate 3-epimerase, chloroplastic (280 aa).

The transit peptide at 1–45 directs the protein to the chloroplast; the sequence is SLGSSTLLQSQISGFGGSQKLQKISFSNPNSLTFTRRRIQTVVNA. Residue serine 62 coordinates substrate. A divalent metal cation is bound by residues histidine 87, aspartate 89, and histidine 120. Aspartate 89 acts as the Proton acceptor in catalysis. Substrate contacts are provided by residues histidine 120, 198-201, 231-233, and 253-254; these read GFGG, DGG, and GS. Aspartate 231 is an a divalent metal cation binding site. Aspartate 231 serves as the catalytic Proton donor.

This sequence belongs to the ribulose-phosphate 3-epimerase family. In terms of assembly, homohexamer. Co(2+) serves as cofactor. The cofactor is Fe(2+). It depends on Mn(2+) as a cofactor. Requires Zn(2+) as cofactor. Highest level of expression in leaves, whereas it is low in roots, tubers, and stems.

The protein resides in the plastid. It localises to the chloroplast thylakoid membrane. It carries out the reaction D-ribulose 5-phosphate = D-xylulose 5-phosphate. It participates in carbohydrate biosynthesis; Calvin cycle. In terms of biological role, catalyzes the reversible epimerization of D-ribulose 5-phosphate to D-xylulose 5-phosphate. In Solanum tuberosum (Potato), this protein is Ribulose-phosphate 3-epimerase, chloroplastic.